The following is a 137-amino-acid chain: Large ribosomal subunit protein uL16 (137 aa).

Residues methionine 1 to asparagine 17 are compositionally biased toward basic residues. Residues methionine 1–asparagine 23 are disordered.

It belongs to the universal ribosomal protein uL16 family. In terms of assembly, part of the 50S ribosomal subunit.

Binds 23S rRNA and is also seen to make contacts with the A and possibly P site tRNAs. The polypeptide is Large ribosomal subunit protein uL16 (Pseudoalteromonas translucida (strain TAC 125)).